A 67-amino-acid chain; its full sequence is Beta-defensin 9 (67 aa).

Residues 1–24 form the signal peptide; sequence MRTLCSLLLICCLLFSYTTPAANS. 3 disulfide bridges follow: Cys-34–Cys-62, Cys-41–Cys-55, and Cys-45–Cys-63.

Belongs to the beta-defensin family. As to expression, weakly expressed in adult and neonatal brain.

It is found in the secreted. Has antibacterial activity. The chain is Beta-defensin 9 (Defb9) from Mus musculus (Mouse).